A 782-amino-acid polypeptide reads, in one-letter code: General transcription and DNA repair factor IIH helicase/translocase subunit XPB (782 aa).

The span at 1-11 shows a compositional bias: basic and acidic residues; the sequence is MGKRDRADRDK. 2 disordered regions span residues 1-51 and 218-241; these read MGKR…ESGT and SAIS…PQGK. A Nuclear localization signal motif is present at residues 6–18; that stretch reads RADRDKKKSRKRH. A compositionally biased stretch (acidic residues) spans 21–30; sequence DEEDDEEDAP. Polar residues predominate over residues 218 to 236; that stretch reads SAISKTAESSGGPSTSRVT. The Helicase ATP-binding domain maps to 327 to 488; sequence MFGNGRARSG…DLNFLIGPKL (162 aa). Residue 340 to 347 participates in ATP binding; it reads LPCGAGKS. Residues 441 to 444 carry the DEVH box motif; it reads DEVH. The 161-residue stretch at 542 to 702 folds into the Helicase C-terminal domain; it reads RACQFLIKFH…LAGMEEEDLA (161 aa). 2 residues coordinate ATP: R642 and R645. S686 carries the phosphoserine modification. Residue S751 is modified to Phosphoserine; by CK2.

Belongs to the helicase family. RAD25/XPB subfamily. Component of the 7-subunit TFIIH core complex composed of XPB/ERCC3, XPD/ERCC2, GTF2H1, GTF2H2, GTF2H3, GTF2H4 and GTF2H5, which is active in NER. The core complex associates with the 3-subunit CDK-activating kinase (CAK) module composed of CCNH/cyclin H, CDK7 and MNAT1 to form the 10-subunit holoenzyme (holo-TFIIH) active in transcription. Interacts with PUF60. Interacts with ATF7IP. Interacts with KAT2A; leading to KAT2A recruitment to promoters and acetylation of histones. Part of TBP-based Pol II pre-initiation complex (PIC), in which Pol II core assembles with general transcription factors and other specific initiation factors including GTF2E1, GTF2E2, GTF2F1, GTF2F2, TCEA1, ERCC2, ERCC3, GTF2H2, GTF2H3, GTF2H4, GTF2H5, GTF2A1, GTF2A2, GTF2B and TBP; this large multi-subunit PIC complex mediates DNA unwinding and targets Pol II core to the transcription start site where the first phosphodiester bond forms. In terms of assembly, (Microbial infection) Interacts with Epstein-Barr virus EBNA2. Phosphorylation on Ser-751 by CK2 controls the 5'-excision activity of ERCC1-XPF endonuclease; phosphorylated protein inhibits the excision activity and thus NER. Dephosphorylation reactivates the 5'-excision step. Phosphorylation has no effect on transcription or the 3'-5' helicase activity.

The protein resides in the nucleus. It catalyses the reaction Couples ATP hydrolysis with the unwinding of duplex DNA by translocating in the 3'-5' direction.. It carries out the reaction ATP + H2O = ADP + phosphate + H(+). With respect to regulation, phosphorylation on Ser-751 by CK2 controls the 5'-excision activity of ERCC1-XPF endonuclease; phosphorylated protein inhibits the excision activity and thus NER. ATPase activity is stimulated by TFIIH subunit p52 (GTF2H4). DNA translocase activity by this subunit in TFIIH is stimulated by XPA, ERCC5/XPG and XFP plus ERCC1; translocase activity is sensitive to triptolide which targets this enzyme. In terms of biological role, ATP-dependent 3'-5' DNA helicase/translocase. Binds dsDNA rather than ssDNA, unzipping it in a translocase rather than classical helicase activity. Component of the general transcription and DNA repair factor IIH (TFIIH) core complex. When complexed to CDK-activating kinase (CAK), involved in RNA transcription by RNA polymerase II. The ATPase activity of XPB/ERCC3, but not its helicase activity, is required for DNA opening; it may wrap around the damaged DNA wedging it open, causing localized melting that allows XPD/ERCC2 helicase to anchor. In transcription, TFIIH has an essential role in transcription initiation. When the pre-initiation complex (PIC) has been established, TFIIH is required for promoter opening and promoter escape. The ATP-dependent helicase activity of XPB/ERCC3 is required for promoter opening and promoter escape. In transcription pre-initiation complexes induces and propagates a DNA twist to open DNA. Also involved in transcription-coupled nucleotide excision repair (NER) of damaged DNA. In NER, TFIIH acts by opening DNA around the lesion to allow the excision of the damaged oligonucleotide and its replacement by a new DNA fragment. The structure of the TFIIH transcription complex differs from the NER-TFIIH complex; large movements by XPD/ERCC2 and XPB/ERCC3 are stabilized by XPA. XPA retains XPB/ERCC3 at the 5' end of a DNA bubble (mimicking DNA damage). This is General transcription and DNA repair factor IIH helicase/translocase subunit XPB from Homo sapiens (Human).